We begin with the raw amino-acid sequence, 761 residues long: Phosphoribosylformylglycinamidine synthase subunit PurL (761 aa).

The active site involves His48. ATP-binding residues include Tyr51 and Lys90. Glu92 provides a ligand contact to Mg(2+). Substrate contacts are provided by residues 93–96 and Arg115; that span reads SHNH. His94 (proton acceptor) is an active-site residue. Residue Asp116 participates in Mg(2+) binding. Gln239 contributes to the substrate binding site. Asp267 is a binding site for Mg(2+). 311–313 serves as a coordination point for substrate; that stretch reads ESQ. Asp499 and Gly536 together coordinate ATP. Asn537 contributes to the Mg(2+) binding site. A substrate-binding site is contributed by Ser539.

Belongs to the FGAMS family. As to quaternary structure, monomer. Part of the FGAM synthase complex composed of 1 PurL, 1 PurQ and 2 PurS subunits.

It is found in the cytoplasm. The catalysed reaction is N(2)-formyl-N(1)-(5-phospho-beta-D-ribosyl)glycinamide + L-glutamine + ATP + H2O = 2-formamido-N(1)-(5-O-phospho-beta-D-ribosyl)acetamidine + L-glutamate + ADP + phosphate + H(+). It participates in purine metabolism; IMP biosynthesis via de novo pathway; 5-amino-1-(5-phospho-D-ribosyl)imidazole from N(2)-formyl-N(1)-(5-phospho-D-ribosyl)glycinamide: step 1/2. Its function is as follows. Part of the phosphoribosylformylglycinamidine synthase complex involved in the purines biosynthetic pathway. Catalyzes the ATP-dependent conversion of formylglycinamide ribonucleotide (FGAR) and glutamine to yield formylglycinamidine ribonucleotide (FGAM) and glutamate. The FGAM synthase complex is composed of three subunits. PurQ produces an ammonia molecule by converting glutamine to glutamate. PurL transfers the ammonia molecule to FGAR to form FGAM in an ATP-dependent manner. PurS interacts with PurQ and PurL and is thought to assist in the transfer of the ammonia molecule from PurQ to PurL. In Thermosynechococcus vestitus (strain NIES-2133 / IAM M-273 / BP-1), this protein is Phosphoribosylformylglycinamidine synthase subunit PurL.